Here is a 152-residue protein sequence, read N- to C-terminus: UPF0311 protein blr7842 (152 aa).

It belongs to the UPF0311 family.

The chain is UPF0311 protein blr7842 from Bradyrhizobium diazoefficiens (strain JCM 10833 / BCRC 13528 / IAM 13628 / NBRC 14792 / USDA 110).